A 348-amino-acid polypeptide reads, in one-letter code: UDP-3-O-acylglucosamine N-acyltransferase (348 aa).

Residue His257 is the Proton acceptor of the active site.

Belongs to the transferase hexapeptide repeat family. LpxD subfamily. Homotrimer.

It catalyses the reaction a UDP-3-O-[(3R)-3-hydroxyacyl]-alpha-D-glucosamine + a (3R)-hydroxyacyl-[ACP] = a UDP-2-N,3-O-bis[(3R)-3-hydroxyacyl]-alpha-D-glucosamine + holo-[ACP] + H(+). Its pathway is bacterial outer membrane biogenesis; LPS lipid A biosynthesis. Its function is as follows. Catalyzes the N-acylation of UDP-3-O-acylglucosamine using 3-hydroxyacyl-ACP as the acyl donor. Is involved in the biosynthesis of lipid A, a phosphorylated glycolipid that anchors the lipopolysaccharide to the outer membrane of the cell. The sequence is that of UDP-3-O-acylglucosamine N-acyltransferase from Bartonella henselae (strain ATCC 49882 / DSM 28221 / CCUG 30454 / Houston 1) (Rochalimaea henselae).